We begin with the raw amino-acid sequence, 230 residues long: Orotidine 5'-phosphate decarboxylase (230 aa).

Substrate is bound by residues Asp10, Lys32, 59 to 68, Thr119, Arg180, Gln189, Gly209, and Arg210; that span reads DLKYHDIPNT. Lys61 acts as the Proton donor in catalysis.

This sequence belongs to the OMP decarboxylase family. Type 1 subfamily. In terms of assembly, homodimer.

It carries out the reaction orotidine 5'-phosphate + H(+) = UMP + CO2. It functions in the pathway pyrimidine metabolism; UMP biosynthesis via de novo pathway; UMP from orotate: step 2/2. Its function is as follows. Catalyzes the decarboxylation of orotidine 5'-monophosphate (OMP) to uridine 5'-monophosphate (UMP). The polypeptide is Orotidine 5'-phosphate decarboxylase (Actinobacillus pleuropneumoniae serotype 5b (strain L20)).